Consider the following 644-residue polypeptide: Threonine--tRNA ligase (644 aa).

The 61-residue stretch at 1–61 folds into the TGS domain; the sequence is MVAITLPDGS…VADAKVEIVT (61 aa). A catalytic region spans residues 242–533; it reads DHRKIGKALN…LIENYAGWMP (292 aa). C333, H384, and H510 together coordinate Zn(2+).

The protein belongs to the class-II aminoacyl-tRNA synthetase family. In terms of assembly, homodimer. Zn(2+) is required as a cofactor.

Its subcellular location is the cytoplasm. The catalysed reaction is tRNA(Thr) + L-threonine + ATP = L-threonyl-tRNA(Thr) + AMP + diphosphate + H(+). Functionally, catalyzes the attachment of threonine to tRNA(Thr) in a two-step reaction: L-threonine is first activated by ATP to form Thr-AMP and then transferred to the acceptor end of tRNA(Thr). Also edits incorrectly charged L-seryl-tRNA(Thr). This Psychrobacter arcticus (strain DSM 17307 / VKM B-2377 / 273-4) protein is Threonine--tRNA ligase.